We begin with the raw amino-acid sequence, 141 residues long: Large ribosomal subunit protein uL11 (141 aa).

This sequence belongs to the universal ribosomal protein uL11 family. In terms of assembly, part of the ribosomal stalk of the 50S ribosomal subunit. Interacts with L10 and the large rRNA to form the base of the stalk. L10 forms an elongated spine to which L12 dimers bind in a sequential fashion forming a multimeric L10(L12)X complex. Post-translationally, one or more lysine residues are methylated.

Functionally, forms part of the ribosomal stalk which helps the ribosome interact with GTP-bound translation factors. The sequence is that of Large ribosomal subunit protein uL11 from Desulfotalea psychrophila (strain LSv54 / DSM 12343).